The primary structure comprises 864 residues: MGNRGMEDLIPLVNRLQDAFSAIGQNADLDLPQIAVVGGQSAGKSSVLENFVGRDFLPRGSGIVTRRPLVLQLVNSTTEYAEFLHCKGKKFTDFEEVRLEIEAETDRVTGTNKGISPVPINLRVYSPHVLNLTLVDLPGMTKVPVGDQPPDIEFQIRDMLMQFVTKENCLILAVSPANSDLANSDALKIAKEVDPQGQRTIGVITKLDLMDEGTDARDVLENKLLPLRRGYIGVVNRSQKDIDGKKDITAALAAERKFFLSHPSYRHLADRMGTPYLQKVLNQQLTNHIRDTLPGLRNKLQSQLLSIEKEVDEYKNFRPDDPARKTKALLQMVQQFAVDFEKRIEGSGDQIDTYELSGGARINRIFHERFPFELVKMEFDEKELRREISYAIKNIHGIRTGLFTPDLAFEATVKKQVQKLKEPSIKCVDMVVSELTSTIRKCSEKLQQYPRLREEMERIVTTHIREREGRTKEQVMLLIDIELAYMNTNHEDFIGFANAQQRSNQMNKKKTSGNQDEILVIRKGWLTINNIGIMKGGSKEYWFVLTAENLSWYKDDEEKEKKYMLSVDNLKLRDVEKGFMSSKHIFALFNTEQRNVYKDYRQLELACETQEEVDSWKASFLRAGVYPERVGDKEKASETEENGSDSFMHSMDPQLERQVETIRNLVDSYMAIVNKTVRDLMPKTIMHLMINNTKEFIFSELLANLYSCGDQNTLMEESAEQAQRRDEMLRMYHALKEALSIIGDINTTTVSTPMPPPVDDSWLQVQSVPAGRRSPTSSPTPQRRAPAVPPARPGSRGPAPGPPPAGSALGGAPPVPSRPGASPDPFGPPPQVPSRPNRAPPGVPSRSGQASPSRPESPRPPFDL.

Residues 28–294 (DLDLPQIAVV…LTNHIRDTLP (267 aa)) enclose the Dynamin-type G domain. Residues 38-45 (GGQSAGKS) form a G1 motif region. Positions 41, 43, 44, 45, 46, 59, and 60 each coordinate GDP. Residues 64-66 (VTR) are G2 motif. At tyrosine 80 the chain carries Phosphotyrosine. The residue at position 125 (tyrosine 125) is a 3'-nitrotyrosine; alternate. Residue tyrosine 125 is modified to Phosphotyrosine; alternate. Residues 136-139 (DLPG) form a G3 motif region. The segment at 205 to 208 (TKLD) is G4 motif. The GDP site is built by lysine 206, aspartate 208, aspartate 211, asparagine 236, arginine 237, and glutamine 239. Positions 235–238 (VNRS) are G5 motif. Phosphoserine occurs at positions 306 and 347. Tyrosine 354 is subject to Phosphotyrosine. Residue serine 512 is modified to Phosphoserine. The PH domain maps to 519-625 (LVIRKGWLTI…WKASFLRAGV (107 aa)). The GED domain maps to 659-750 (VETIRNLVDS…IIGDINTTTV (92 aa)). The interval 767–864 (SVPAGRRSPT…PESPRPPFDL (98 aa)) is disordered. Position 774 is a phosphoserine; by CDK5 (serine 774). Serine 778 bears the Phosphoserine mark. Arginine 796 is modified (omega-N-methylarginine). Serine 822 carries the post-translational modification Phosphoserine. Residues 825-843 (PFGPPPQVPSRPNRAPPGV) show a composition bias toward pro residues. A phosphoserine mark is found at serine 851 and serine 857.

It belongs to the TRAFAC class dynamin-like GTPase superfamily. Dynamin/Fzo/YdjA family. As to quaternary structure, homodimer; homodimerization is mediated by the dynamin-type G domain which promotes assembly-stimulated GTPase activity. Homo-tetramer formed from two dimers in the absence of lipid. Oligomerizes into a helical polymer that self-assembles around the vesicle membrane, when associated to the menbrane through lipid binding. Interacts (via C-terminal proline-rich domain (PRD)) with SNX9 (via SH3 domain); this interaction allows regulation of DNM1 self-assembly during late stages of endocytic vesicle formation and supports DNM1's early functions in accelerating clathrin-coated pits (CCPs) maturation in non neuronals cell. Interacts (via C-terminal proline-rich domain (PRD)) with MYO1E (via SH3 domain); this interaction regulates receptor-mediated endocytosis. Interacts with SNX33 (via SH3 domain); this interaction decreases DNM1-dependent endocytosis. Interacts with DIAPH1. Interacts with GRB2 (via SH3 domain); this interaction mediates disassembly of DNM1 polymers, therefore modulates self-assembly. Forms a complex with BIN1 (via SH3 domain) and SH3GL2 (via SH3 domain). Forms a complex with SH3GL2 (via SH3 domain) and AMPH (via SH3 domain). Forms a complex with SH3GL2 (via SH3 domain) and SYNJ1. Interacts with AMPH. Interacts (via C-terminal proline-rich domain (PRD)) with SYT1; this interaction facilitates vesicle fission during clathrin-mediated endocytosis (CME). Interacts (via C-terminal proline-rich domain (PRD)) with PLCG1 (via SH3 domain); this interaction stimulates the release of GDP from DNM1 and enhances DNM1-dependent endocytosis. Interacts with SNPH; this interaction inhibits the binding of DNM1 to AMPH and DNM1-receptor-mediated endocytosis. Interacts with CAV1. Interacts with SH3GLB1 (via SH3 domain). Interacts with PACSIN1 (via SH3 domain), PACSIN2 (via SH3 domain) and PACSIN3 (via SH3 domain). Interacts with UNC119; this interaction decreases DNM1's GTPase activity and affects DNM1's interaction with AMPH. Interacts (GTP-bound form) with DNAJC6; this interaction allows clathrin-coated vesicle (CCV) formation at the plasma membrane. Phosphorylation at Ser-774 by GSK3B/GSK3-beta leads to inactivation of receptor-mediated endocytosis in non-neuronal cells. Dephosphorylation at Ser-774, through the EGFR downstream signaling, leads to activation and regulates early stages of clathrin-mediated endocytosis (CME). Phosphorylated by CDK5 leading to synaptic vesicle endocytosis (SVE) activation. As to expression, brain-specific (peripheral sensory neurons).

It localises to the cytoplasmic vesicle. The protein localises to the clathrin-coated vesicle. Its subcellular location is the golgi apparatus. It is found in the cell membrane. The protein resides in the membrane. It localises to the clathrin-coated pit. The protein localises to the presynapse. Its subcellular location is the secretory vesicle. It is found in the chromaffin granule. It carries out the reaction GTP + H2O = GDP + phosphate + H(+). In terms of biological role, catalyzes the hydrolysis of GTP and utilizes this energy to mediate vesicle scission and participates in many forms of endocytosis, such as clathrin-mediated endocytosis or synaptic vesicle endocytosis as well as rapid endocytosis (RE). Associates to the membrane, through lipid binding, and self-assembles into rings and stacks of interconnected rings through oligomerization to form a helical polymer around the vesicle membrane leading to constriction of invaginated coated pits around their necks. Self-assembly of the helical polymer induces membrane tubules narrowing until the polymer reaches a length sufficient to trigger GTP hydrolysis. Depending on the curvature imposed on the tubules, membrane detachment from the helical polymer upon GTP hydrolysis can cause spontaneous hemifission followed by complete fission. May play a role in regulating early stages of clathrin-mediated endocytosis in non-neuronal cells through its activation by dephosphorylation via the signaling downstream of EGFR. Controls vesicle size at a step before fission, during formation of membrane pits, at hippocampal synapses. Controls plastic adaptation of the synaptic vesicle recycling machinery to high levels of activity. Mediates rapid endocytosis (RE), a Ca(2+)-dependent and clathrin- and K(+)-independent process in chromaffin cells. Microtubule-associated force-producing protein involved in producing microtubule bundles and able to bind and hydrolyze GTP. Through its interaction with DNAJC6, acts during the early steps of clathrin-coated vesicle (CCV) formation. This is Dynamin-1 (Dnm1) from Rattus norvegicus (Rat).